Consider the following 260-residue polypeptide: MAVAPTAREENVYMAKLAEQAERYEEMVEFMEKVSNSLGSEELTVEERNLLSVAYKNVIGARRASWRIISSIEQKEESRGNEEHVNSIREYRSKIENELSKICDGILKLLDAKLIPSAASGDSKVFYLKMKGDYHRYLAEFKTGAERKEAAESTLTAYKAAQDIATTELAPTHPIRLGLALNFSVFYYEILNSPDRACNLAKQAFDEAIAELDTLGEESYKDSTLIMQLLRDNLTLWTSDMQDDGADEIKEDPKPDEAKN.

Belongs to the 14-3-3 family.

In Nicotiana tabacum (Common tobacco), this protein is 14-3-3-like protein C.